A 352-amino-acid polypeptide reads, in one-letter code: Probable protein phosphatase 2C 56 (352 aa).

Disordered regions lie at residues Arg18–Gly37 and Ser53–Gly87. Low complexity-rich tracts occupy residues Ala23 to Gly37 and Ser53 to Arg75. A PPM-type phosphatase domain is found at Ser96–Phe343. Mn(2+)-binding residues include Asp132, Gly133, Asp295, and Asp334.

It belongs to the PP2C family. It depends on Mg(2+) as a cofactor. The cofactor is Mn(2+).

It carries out the reaction O-phospho-L-seryl-[protein] + H2O = L-seryl-[protein] + phosphate. The enzyme catalyses O-phospho-L-threonyl-[protein] + H2O = L-threonyl-[protein] + phosphate. The polypeptide is Probable protein phosphatase 2C 56 (Oryza sativa subsp. japonica (Rice)).